A 188-amino-acid polypeptide reads, in one-letter code: Ribosome-recycling factor (188 aa).

This sequence belongs to the RRF family.

The protein resides in the cytoplasm. Functionally, responsible for the release of ribosomes from messenger RNA at the termination of protein biosynthesis. May increase the efficiency of translation by recycling ribosomes from one round of translation to another. This chain is Ribosome-recycling factor, found in Anaeromyxobacter sp. (strain K).